The sequence spans 442 residues: Vitellogenin-2 (442 aa).

The signal sequence occupies residues 1–19 (MNPLRTLCVMACLLAVAMG). Positions 21–33 (PQSGNRSGRRSNS) are enriched in low complexity. A disordered region spans residues 21–44 (PQSGNRSGRRSNSLDNVEQPSNWV). 2 positions are modified to phosphoserine: Ser-31 and Ser-33. Positions 34 to 44 (LDNVEQPSNWV) are enriched in polar residues. Ser-82 is subject to Phosphoserine. 2 disordered regions span residues 165-200 (QPYE…QDDT) and 408-442 (KSPF…SRRQ). Thr-170 is subject to Phosphothreonine. At Tyr-172 the chain carries Sulfotyrosine. Phosphoserine occurs at positions 173, 178, 181, 182, and 183. 2 stretches are compositionally biased toward low complexity: residues 175-186 (EEQSQRSSSEEQ) and 431-442 (RQSSSNQGSRRQ).

The protein belongs to the AB hydrolase superfamily. Lipase family. Post-translationally, tyrosine sulfation occurs in the female only and plays an essential functional role. In terms of tissue distribution, synthesized in the fat body and ovarian follicle cells and accumulate in the oocyte.

It localises to the secreted. Its function is as follows. Vitellogenin is the major yolk protein of eggs where it is used as a food source during embryogenesis. Vitellogenins and their receptor yl/yolkless are required for maintenance of microtubule plus-end orientation towards the posterior pole of oocytes. Involved in polarized localization of germ plasm components, such as osk mRNA and vas protein, to the oocyte posterior cortex. Receptor-mediated endocytosis by yl/yolkless is crucial for actin reorganization, mediated by osk isoform A/Long, required to anchor germ plasm components to the oocyte cortex. The sequence is that of Vitellogenin-2 (Yp2) from Drosophila melanogaster (Fruit fly).